We begin with the raw amino-acid sequence, 545 residues long: MSLRESPFPNGFLEGLHAVGWGLIFPCFWFLDRLIAVCISTTLERMWRLEQECYLHPLKVVFGSILFFILFVISTPFALLGFILWAPLQAIRRPFSYHKQEQSIPMENRNARWEEMGKISFGFLTANVCLLPDGIARFNNLGHTQKRALIIGKSIVQGVTRPHIRIFVDSPSSCGTVTPSSSLIPQPNASSYGSVDASGELPDAIEVNEITPKPNCNQNSNHQKHPPRSLRTLLRDADIPMEVSALFPPSVDIVCLQEVFDKRAARKLTQALGPLYGHVLYDVGVYACHPAGSCSSFKFFNSGLFLASRFPIMEAEYRCFPNGRGEDALAAKGLLTVKVDIGLQKGEKRMVGFINCTHLHAPEGDGAIRFEQLNMLSKWTSEFQTLNRRDDELPLFDVLCGDFNFDNCSPDDRLEQSHSVFDEYTDPCRAAAGKEKPWVIGTLLEQPTLYDENMRTPDNLQRTLESEDLRKDFISPPVALDGVPLVYPEADQPWIGRRIDYLLYREKSGHRTEVEELTYVTQLAGLTDHIPVGFRLSVSLDSEQN.

A mitochondrion-targeting transit peptide spans 1 to 35; that stretch reads MSLRESPFPNGFLEGLHAVGWGLIFPCFWFLDRLI. Residues 36-64 lie on the Mitochondrial matrix side of the membrane; that stretch reads AVCISTTLERMWRLEQECYLHPLKVVFGS. A helical; Signal-anchor for type II membrane protein transmembrane segment spans residues 65-85; it reads ILFFILFVISTPFALLGFILW. Over 86–545 the chain is Mitochondrial intermembrane; the sequence is APLQAIRRPF…LSVSLDSEQN (460 aa). Residue glutamate 258 participates in Mg(2+) binding. The active-site Proton acceptor is the histidine 529.

This sequence belongs to the neutral sphingomyelinase family. It depends on Mg(2+) as a cofactor. Mn(2+) serves as cofactor.

The protein resides in the mitochondrion inner membrane. It localises to the endoplasmic reticulum membrane. The enzyme catalyses a sphingomyelin + H2O = phosphocholine + an N-acylsphing-4-enine + H(+). It carries out the reaction N-(hexadecanoyl)-sphing-4-enine-1-phosphocholine + H2O = N-hexadecanoylsphing-4-enine + phosphocholine + H(+). It functions in the pathway lipid metabolism; sphingolipid metabolism. Activated by the phospholipids cardiolipin, phosphatidylserine, and phosphatidylethanolamine. Strongest activation with cardiolipin. Its function is as follows. Catalyzes the hydrolysis of membrane sphingomyelin to form phosphorylcholine and ceramide. The protein is Sphingomyelin phosphodiesterase 5 of Danio rerio (Zebrafish).